A 68-amino-acid polypeptide reads, in one-letter code: UPF0434 protein BTH_I0741 (68 aa).

This sequence belongs to the UPF0434 family.

In Burkholderia thailandensis (strain ATCC 700388 / DSM 13276 / CCUG 48851 / CIP 106301 / E264), this protein is UPF0434 protein BTH_I0741.